A 190-amino-acid chain; its full sequence is MSKPTREEAKEAVRTLLKFIGEDPNREGLLKTPDRVINSYTEIFSGYGKDAQEILNTKFYDICNFQDLISLEGIKFTSFCEHHILPFNGTVHIAYIPDNCIIGVSKLARIVNIFARRLQIQEKMTLEIAESVQENLKPLGVAVKISALHSCMSMRGVMHDNSVMNTMYYTGIFAEQQKYRYEFLNLIAKR.

Zn(2+) is bound by residues Cys-80, His-83, and Cys-151.

This sequence belongs to the GTP cyclohydrolase I family. In terms of assembly, toroid-shaped homodecamer, composed of two pentamers of five dimers.

The catalysed reaction is GTP + H2O = 7,8-dihydroneopterin 3'-triphosphate + formate + H(+). Its pathway is cofactor biosynthesis; 7,8-dihydroneopterin triphosphate biosynthesis; 7,8-dihydroneopterin triphosphate from GTP: step 1/1. The chain is GTP cyclohydrolase 1 (folE) from Rickettsia prowazekii (strain Madrid E).